The sequence spans 637 residues: Chaperone protein HtpG (637 aa).

The interval 1-345 (MSQQETHGFQ…SNDLPLNVSR (345 aa)) is a; substrate-binding. The tract at residues 346–562 (EILQDNHITK…EGEMSSQMIK (217 aa)) is b. The segment at 563–637 (LMQAAGQPVP…MNQMLLANLK (75 aa)) is c.

It belongs to the heat shock protein 90 family. As to quaternary structure, homodimer.

It localises to the cytoplasm. Molecular chaperone. Has ATPase activity. This chain is Chaperone protein HtpG, found in Shewanella sp. (strain MR-4).